Here is a 581-residue protein sequence, read N- to C-terminus: Arginine--tRNA ligase (581 aa).

A 'HIGH' region motif is present at residues 126–136 (PNLAKEMHVGH).

It belongs to the class-I aminoacyl-tRNA synthetase family. Monomer.

The protein localises to the cytoplasm. It carries out the reaction tRNA(Arg) + L-arginine + ATP = L-arginyl-tRNA(Arg) + AMP + diphosphate. This chain is Arginine--tRNA ligase, found in Shewanella baltica (strain OS223).